The chain runs to 140 residues: Large ribosomal subunit protein uL14x/uL14z/uL14y (140 aa).

This sequence belongs to the universal ribosomal protein uL14 family.

This chain is Large ribosomal subunit protein uL14x/uL14z/uL14y (RPL23A), found in Arabidopsis thaliana (Mouse-ear cress).